The chain runs to 828 residues: MAEAALLLLPEAAAERDAREKLALWDRRPDTTAPLTDRQTDSVLELKAAAENLPVPAELPIEDLCSLTSQSLPIELTSVVPESTEDILLKGFTSLGMEEERIETAQQFFSWFAKLQTQMDQDEGTKYRQMRDYLSGFQEQCDAILNDVNSALQHLESLQKQYLFVSNKTGTLHEACEQLLKEQSELVDLAENIQQKLSYFNELETINTKLNSPTLSVNSDGFIPMLAKLDDCITYISSHPNFKDYPIYLLKFKQCLSKALHLMKTYTVNTLQTLTSQLLKRDPSSVPNADNAFTLFYVKFRAAAPKVRTLIEQIELRSEKIPEYQQLLNDIHQCYLDQRELLLGPSIACTVAELTSQNNRDHCALVRSGCAFMVHVCQDEHQLYNEFFTKPTSKLDELLEKLCVSLYDVFRPLIIHVIHLETLSELCGILKNEVLEDHVQNNAEQLGAFAAGVKQMLEDVQERLVYRTHIYIQTDITGYKPAPGDLAYPDKLVMMEQIAQSLKDEQKKVPSEASFSDVHLEEGESNSLTKSGSTESLNPRPQTTISPADLHGMWYPTVRRTLVCLSKLYRCIDRAVFQGLSQEALSACIQSLLGASESISKNKTQIDGQLFLIKHLLILREQIAPFHTEFTIKEISLDLKKTRDAAFKILNPMTVPRFFRLNSNNALIEFLLEGTPEIREHYLDSKKDVDRHLKSACEQFIQQQTKLFVEQLEEFMTKVSALKTMASQGGPKYTLSQQPWAQPAKVNDLAATAYKTIKTKLPVTLRSMSLYLSNKDTEFILFKPVRNNIQQVFQKFHALLKEEFSPEDIQIIACPSMEQLSLLLLVSK.

Ala-2 carries the post-translational modification N-acetylalanine. Positions Asp-504–Thr-543 are disordered. The segment covering Ser-525–Thr-543 has biased composition (polar residues). Ser-663 bears the Phosphoserine mark.

Belongs to the COG3 family. In terms of assembly, component of the conserved oligomeric Golgi complex which is composed of eight different subunits and is required for normal Golgi morphology and localization. Interacts with TMEM115. In terms of tissue distribution, widely expressed with highest levels in pancreas and testis and lowest levels in lung.

It localises to the golgi apparatus. It is found in the golgi stack membrane. Its function is as follows. Involved in ER-Golgi transport. Also involved in retrograde (Golgi to ER) transport. This chain is Conserved oligomeric Golgi complex subunit 3 (COG3), found in Homo sapiens (Human).